A 345-amino-acid chain; its full sequence is Eukaryotic translation initiation factor 3 subunit F (345 aa).

Positions 30-166 (VVIQPQAIFS…TRAYISAPVG (137 aa)) constitute an MPN domain. Residues 308–345 (GGESGGAESGAQRGQRGGKGGRGGQQRNQERGAEEARA) form a disordered region. The segment covering 322 to 331 (QRGGKGGRGG) has biased composition (gly residues). Residues 335 to 345 (NQERGAEEARA) are compositionally biased toward basic and acidic residues.

This sequence belongs to the eIF-3 subunit F family. As to quaternary structure, component of the eukaryotic translation initiation factor 3 (eIF-3) complex.

It is found in the cytoplasm. Component of the eukaryotic translation initiation factor 3 (eIF-3) complex, which is involved in protein synthesis of a specialized repertoire of mRNAs and, together with other initiation factors, stimulates binding of mRNA and methionyl-tRNAi to the 40S ribosome. The eIF-3 complex specifically targets and initiates translation of a subset of mRNAs involved in cell proliferation. The protein is Eukaryotic translation initiation factor 3 subunit F of Aspergillus clavatus (strain ATCC 1007 / CBS 513.65 / DSM 816 / NCTC 3887 / NRRL 1 / QM 1276 / 107).